Reading from the N-terminus, the 623-residue chain is Ciliated left-right organizer metallopeptidase (623 aa).

Residues 1-20 form the signal peptide; it reads MSFLLCIGILLLPWFPCVCG. At 21-578 the chain is on the extracellular side; it reads KCIFDQIQRS…LFLVSEAKIS (558 aa). H249 serves as a coordination point for Zn(2+). E250 is a catalytic residue. Zn(2+) contacts are provided by H253 and H326. Residues 579–599 form a helical membrane-spanning segment; sequence LAAVLSLMAVFALLSAAVLLY. At 600 to 623 the chain is on the cytoplasmic side; sequence RKNLSVRVHAASYRTPLPHILYRN.

This sequence belongs to the peptidase M8 family. Zn(2+) is required as a cofactor. As to expression, expressed specifically in dorsal forerunner cells (DFCs) that form a ciliated Kupffer's vesicle later.

It localises to the membrane. In terms of biological role, plays an essential role for patterning the left-right axis. Requires solely on the left side, downstream of the leftward flow, but upstream of dand5, a nodal inhibitor involved in left-right patterning. This chain is Ciliated left-right organizer metallopeptidase (cirop), found in Danio rerio (Zebrafish).